A 416-amino-acid polypeptide reads, in one-letter code: Pectin acetylesterase 3 (416 aa).

Positions 1 to 25 are cleaved as a signal peptide; that stretch reads MKSVLRIAAAIFWLWLFIVLGVIGS. N131 carries an N-linked (GlcNAc...) asparagine glycan. Catalysis depends on charge relay system residues S198 and D294. An N-linked (GlcNAc...) asparagine glycan is attached at N324. The Charge relay system role is filled by H361.

It belongs to the pectinacetylesterase family.

The protein resides in the secreted. The protein localises to the cell wall. Hydrolyzes acetyl esters in homogalacturonan regions of pectin. In type I primary cell wall, galacturonic acid residues of pectin can be acetylated at the O-2 and O-3 positions. Decreasing the degree of acetylation of pectin gels in vitro alters their physical properties. The chain is Pectin acetylesterase 3 from Arabidopsis thaliana (Mouse-ear cress).